Consider the following 425-residue polypeptide: tRNA(Ile)-lysidine synthase (425 aa).

27 to 32 contacts ATP; it reads SGGLDS.

The protein belongs to the tRNA(Ile)-lysidine synthase family.

The protein localises to the cytoplasm. It catalyses the reaction cytidine(34) in tRNA(Ile2) + L-lysine + ATP = lysidine(34) in tRNA(Ile2) + AMP + diphosphate + H(+). Its function is as follows. Ligates lysine onto the cytidine present at position 34 of the AUA codon-specific tRNA(Ile) that contains the anticodon CAU, in an ATP-dependent manner. Cytidine is converted to lysidine, thus changing the amino acid specificity of the tRNA from methionine to isoleucine. The chain is tRNA(Ile)-lysidine synthase from Streptococcus pneumoniae serotype 2 (strain D39 / NCTC 7466).